The sequence spans 363 residues: UDP-N-acetylenolpyruvoylglucosamine reductase (363 aa).

Residues 25–201 (IGPVARRMLT…RSAPVRYREL (177 aa)) form the FAD-binding PCMH-type domain. Residue arginine 168 is part of the active site. The Proton donor role is filled by serine 249. Residue glutamate 352 is part of the active site.

Belongs to the MurB family. Requires FAD as cofactor.

The protein resides in the cytoplasm. It carries out the reaction UDP-N-acetyl-alpha-D-muramate + NADP(+) = UDP-N-acetyl-3-O-(1-carboxyvinyl)-alpha-D-glucosamine + NADPH + H(+). It functions in the pathway cell wall biogenesis; peptidoglycan biosynthesis. Functionally, cell wall formation. The protein is UDP-N-acetylenolpyruvoylglucosamine reductase of Mycolicibacterium smegmatis (strain ATCC 700084 / mc(2)155) (Mycobacterium smegmatis).